The following is a 306-amino-acid chain: Pyridoxal 5'-phosphate synthase subunit SNZERR (306 aa).

Aspartate 34 is a D-ribose 5-phosphate binding site. Lysine 91 (schiff-base intermediate with D-ribose 5-phosphate) is an active-site residue. A D-ribose 5-phosphate-binding site is contributed by glycine 163. Position 175 (arginine 175) interacts with D-glyceraldehyde 3-phosphate. D-ribose 5-phosphate-binding positions include glycine 224 and 245–246; that span reads GS.

It belongs to the PdxS/SNZ family.

The catalysed reaction is aldehydo-D-ribose 5-phosphate + D-glyceraldehyde 3-phosphate + L-glutamine = pyridoxal 5'-phosphate + L-glutamate + phosphate + 3 H2O + H(+). The protein operates within cofactor biosynthesis; pyridoxal 5'-phosphate biosynthesis. Its function is as follows. Catalyzes the formation of pyridoxal 5'-phosphate from ribose 5-phosphate (RBP), glyceraldehyde 3-phosphate (G3P) and ammonia. The ammonia is provided by PDX2. Can also use ribulose 5-phosphate and dihydroxyacetone phosphate as substrates, resulting from enzyme-catalyzed isomerization of RBP and G3P, respectively. Also plays an indirect role in resistance to singlet oxygen-generating photosensitizers. The chain is Pyridoxal 5'-phosphate synthase subunit SNZERR (SNZERR) from Suberites domuncula (Sponge).